The chain runs to 351 residues: uncharacterized protein (351 aa).

This is an uncharacterized protein from Caenorhabditis elegans.